Consider the following 85-residue polypeptide: Small ribosomal subunit protein uS17 (85 aa).

Belongs to the universal ribosomal protein uS17 family. As to quaternary structure, part of the 30S ribosomal subunit.

Its function is as follows. One of the primary rRNA binding proteins, it binds specifically to the 5'-end of 16S ribosomal RNA. This Acinetobacter baumannii (strain AB307-0294) protein is Small ribosomal subunit protein uS17.